The primary structure comprises 373 residues: tRNA-specific 2-thiouridylase MnmA (373 aa).

ATP is bound by residues Gly12–Ser19 and Met38. Residues Asn98–Asp100 form an interaction with target base in tRNA region. Cys103 acts as the Nucleophile in catalysis. An intrachain disulfide couples Cys103 to Cys200. An ATP-binding site is contributed by Gly127. The segment at Lys150 to Gln152 is interaction with tRNA. The active-site Cysteine persulfide intermediate is Cys200. The interaction with tRNA stretch occupies residues Arg312–Tyr313.

This sequence belongs to the MnmA/TRMU family.

It is found in the cytoplasm. The enzyme catalyses S-sulfanyl-L-cysteinyl-[protein] + uridine(34) in tRNA + AH2 + ATP = 2-thiouridine(34) in tRNA + L-cysteinyl-[protein] + A + AMP + diphosphate + H(+). In terms of biological role, catalyzes the 2-thiolation of uridine at the wobble position (U34) of tRNA, leading to the formation of s(2)U34. The sequence is that of tRNA-specific 2-thiouridylase MnmA from Streptococcus pneumoniae (strain 70585).